The primary structure comprises 171 residues: Adenine phosphoribosyltransferase (171 aa).

It belongs to the purine/pyrimidine phosphoribosyltransferase family. In terms of assembly, homodimer.

The protein localises to the cytoplasm. The enzyme catalyses AMP + diphosphate = 5-phospho-alpha-D-ribose 1-diphosphate + adenine. Its pathway is purine metabolism; AMP biosynthesis via salvage pathway; AMP from adenine: step 1/1. Its function is as follows. Catalyzes a salvage reaction resulting in the formation of AMP, that is energically less costly than de novo synthesis. The protein is Adenine phosphoribosyltransferase of Shouchella clausii (strain KSM-K16) (Alkalihalobacillus clausii).